The sequence spans 172 residues: Nicotinamide-nucleotide adenylyltransferase (172 aa).

This sequence belongs to the archaeal NMN adenylyltransferase family.

The protein localises to the cytoplasm. It catalyses the reaction beta-nicotinamide D-ribonucleotide + ATP + H(+) = diphosphate + NAD(+). The protein operates within cofactor biosynthesis; NAD(+) biosynthesis; NAD(+) from nicotinamide D-ribonucleotide: step 1/1. In Sulfurisphaera tokodaii (strain DSM 16993 / JCM 10545 / NBRC 100140 / 7) (Sulfolobus tokodaii), this protein is Nicotinamide-nucleotide adenylyltransferase.